We begin with the raw amino-acid sequence, 154 residues long: Cindoxin (154 aa).

The Flavodoxin-like domain occupies 3-145 (ALILYGTETG…TAEEWAREIL (143 aa)). FMN is bound by residues 9-13 (TETGN) and 89-120 (VFGLGDSYYTTFNQAGATAATILASLGGTQVG).

It depends on FMN as a cofactor.

Functionally, involved in the degradation of cineol (eucalyptol). The FMN protein, cindoxin, shuttles electrons between the FAD-containing cindoxin reductase (CinB) and 1,8-cineole 2-endo-monooxygenase (CinA). The polypeptide is Cindoxin (cinC) (Citrobacter braakii).